The sequence spans 357 residues: Phosphoribosylformylglycinamidine cyclo-ligase (357 aa).

Belongs to the AIR synthase family.

It is found in the cytoplasm. It carries out the reaction 2-formamido-N(1)-(5-O-phospho-beta-D-ribosyl)acetamidine + ATP = 5-amino-1-(5-phospho-beta-D-ribosyl)imidazole + ADP + phosphate + H(+). Its pathway is purine metabolism; IMP biosynthesis via de novo pathway; 5-amino-1-(5-phospho-D-ribosyl)imidazole from N(2)-formyl-N(1)-(5-phospho-D-ribosyl)glycinamide: step 2/2. The polypeptide is Phosphoribosylformylglycinamidine cyclo-ligase (Rhizobium leguminosarum bv. trifolii (strain WSM2304)).